A 245-amino-acid chain; its full sequence is Vacuolar iron transporter (245 aa).

Residues M1–D28 lie on the Cytoplasmic side of the membrane. The helical transmembrane segment at I29 to G49 threads the bilayer. The Vacuolar segment spans residues A50 to S55. The chain crosses the membrane as a helical span at residues I56–G76. At Y77–T162 the chain is on the cytoplasmic side. The Fe cation site is built by E94, E97, E105, E108, M141, and E145. A helical membrane pass occupies residues I163 to I183. Residues A184–K186 lie on the Vacuolar side of the membrane. Residues A187–G207 traverse the membrane as a helical segment. Over Y208–P214 the chain is Cytoplasmic. A helical membrane pass occupies residues V215–M235. At A236–E245 the chain is on the vacuolar side.

The protein belongs to the CCC1 family. As to expression, expressed in petal tissues, but not in other parts of the plant, such as leaves, roots, sepals and stems.

It localises to the vacuole membrane. It catalyses the reaction Fe(2+)(in) = Fe(2+)(out). Its function is as follows. Vacuolar iron transporter involved in the transfer of iron ions from the cytosol to the vacuole for intracellular iron storage. Plays an essential role in the development of blue coloration in cornflower petals. This is Vacuolar iron transporter from Centaurea cyanus (Garden cornflower).